A 258-amino-acid chain; its full sequence is 5'-nucleotidase SurE (258 aa).

4 residues coordinate a divalent metal cation: D16, D17, S47, and N99.

The protein belongs to the SurE nucleotidase family. A divalent metal cation serves as cofactor.

The protein localises to the cytoplasm. It catalyses the reaction a ribonucleoside 5'-phosphate + H2O = a ribonucleoside + phosphate. Its function is as follows. Nucleotidase that shows phosphatase activity on nucleoside 5'-monophosphates. This is 5'-nucleotidase SurE from Coxiella burnetii (strain Dugway 5J108-111).